The following is a 354-amino-acid chain: uncharacterized protein (354 aa).

The next 9 membrane-spanning stretches (helical) occupy residues Met9–Ser29, Ile31–Thr51, Asn76–Val96, Phe109–Val129, Ile144–Ile164, Gly185–Val205, Tyr278–Tyr298, Gly306–Gly326, and Ile327–Ile347.

It is found in the cell membrane. This is an uncharacterized protein from Methanocaldococcus jannaschii (strain ATCC 43067 / DSM 2661 / JAL-1 / JCM 10045 / NBRC 100440) (Methanococcus jannaschii).